Consider the following 393-residue polypeptide: 4-O-methyl-glucuronoyl methylesterase (393 aa).

Residues 1 to 19 (MKLSAALLAIAAFANVASA) form the signal peptide. Pyrrolidone carboxylic acid is present on Q20. C22 and C56 are disulfide-bonded. N-linked (GlcNAc...) asparagine glycans are attached at residues N103 and N168. Positions 203–208 (GCSRNG) match the GXSYXG catalytic site motif motif. Intrachain disulfides connect C204–C340 and C236–C312. Residue S205 is the Nucleophile of the active site. Residues K209, Q251, E259, and W303 each contribute to the substrate site. The active-site Proton donor/acceptor is H339.

The protein belongs to the carbohydrate esterase 15 (CE15) family.

It is found in the secreted. The catalysed reaction is a 4-O-methyl-alpha-D-glucuronosyl ester derivative + H2O = 4-O-methyl-alpha-D-glucuronate derivative + an alcohol + H(+). In terms of biological role, glucuronoyl esterase which may play a significant role in biomass degradation, as it is considered to disconnect hemicellulose from lignin through the hydrolysis of the ester bond between 4-O-methyl-D-glucuronic acid residues of glucuronoxylans and aromatic alcohols of lignin. This chain is 4-O-methyl-glucuronoyl methylesterase, found in Schizophyllum commune (strain H4-8 / FGSC 9210) (Split gill fungus).